The following is a 310-amino-acid chain: 2-phospho-L-lactate transferase (310 aa).

The 7,8-didemethyl-8-hydroxy-5-deazariboflavin site is built by Asp50 and Arg89.

This sequence belongs to the CofD family. As to quaternary structure, homodimer. Mg(2+) serves as cofactor.

It catalyses the reaction (2S)-lactyl-2-diphospho-5'-guanosine + 7,8-didemethyl-8-hydroxy-5-deazariboflavin = oxidized coenzyme F420-0 + GMP + H(+). It functions in the pathway cofactor biosynthesis; coenzyme F420 biosynthesis. Catalyzes the transfer of the 2-phospholactate moiety from (2S)-lactyl-2-diphospho-5'-guanosine to 7,8-didemethyl-8-hydroxy-5-deazariboflavin (FO) with the formation of oxidized coenzyme F420-0 and GMP. The protein is 2-phospho-L-lactate transferase of Methanopyrus kandleri (strain AV19 / DSM 6324 / JCM 9639 / NBRC 100938).